Here is a 74-residue protein sequence, read N- to C-terminus: MSATPHTQVHWEENTARPCRKCKWQTPDPTDPLRGQCTVNRHAMGGVWKRWIRDVEHMTCSRHEEGELSFRDHV.

As to quaternary structure, heterohexamer composed of 2 alpha subunits, 2 beta subunits and 2 gamma subunits.

The catalysed reaction is toluene + fumarate = 2-benzylsuccinate. Its pathway is xenobiotic degradation; toluene degradation. Activated by the benzylsuccinate synthase activating enzyme BssD. Rapidly inactivated by oxygen. In terms of biological role, catalyzes the addition of fumarate to the methyl group of toluene, leading to the formation of benzylsuccinate. The polypeptide is Benzylsuccinate synthase beta subunit (bssB) (Thauera aromatica).